The following is a 145-amino-acid chain: Endosomal/vacuolar adapter protein YPT35 (145 aa).

The region spanning 32–145 (ISDVLVGEHH…STVVREFVLG (114 aa)) is the PX domain.

The protein belongs to the YPT35 family.

The protein localises to the endosome membrane. It is found in the vacuole membrane. Its function is as follows. Recruits the lipid transfer protein VPS13 to endosomal and vacuolar membranes. The polypeptide is Endosomal/vacuolar adapter protein YPT35 (YPT35) (Meyerozyma guilliermondii (strain ATCC 6260 / CBS 566 / DSM 6381 / JCM 1539 / NBRC 10279 / NRRL Y-324) (Yeast)).